The following is a 511-amino-acid chain: MSAQMFESFKVNSPNVKYTDEHIISDYTYQTTKVQNVNGELIVEPVDQKYIFKTERKVPRMGVMIVGLCGNNGTTVVGGVIANREGLCWNTKQGLQTPNYFGSVVMSSTIRMGMDENGCDAYIPLKNLIPMVHPNDIVFGGWDINNANLADAMQRAQVFDYDLQVQLIPHMKNITPLPSIYFPDFIAANQKDRANNVLTGTKKEQMEQIRKDIRDFKESNKLDTVVVMWSANTERFSSLVPGVNDTIENLMAAIDRSEEEISPSTLFAVASILENTTYINGSPQNTFVPAVVDLAIQHNVSIGGDDFKTGQTKIKSVLTDYLVSAGIKPVSIVSYNHLGNNDGKNLSAPQQFRSKEITKSNVVDDMIASNNILYKQGEHPDHVIVIKYVPYVGDSKRAMDEYTSQIFMGGHNTIVLHNTCEDSLLAAPIILDLVILAEVTSRITMKKQDDDQFATFHPVLSLLSYLLKAPIVPKHATVVNALFKQRACIENIFKACVGIAPDNNMLLEQRL.

24 residues coordinate NAD(+): G70, N71, N72, D143, S179, I180, Q190, R193, S230, A231, N232, T233, G281, S282, D306, T309, N340, N341, D342, K355, G393, D394, D422, and S423.

This sequence belongs to the myo-inositol 1-phosphate synthase family. The cofactor is NAD(+).

The protein localises to the cytoplasm. The enzyme catalyses D-glucose 6-phosphate = 1D-myo-inositol 3-phosphate. It participates in polyol metabolism; myo-inositol biosynthesis; myo-inositol from D-glucose 6-phosphate: step 1/2. In terms of biological role, key enzyme in myo-inositol biosynthesis pathway that catalyzes the conversion of glucose 6-phosphate to 1-myo-inositol 1-phosphate in a NAD-dependent manner. Rate-limiting enzyme in the synthesis of all inositol-containing compounds. The sequence is that of Inositol-3-phosphate synthase (ino1) from Dictyostelium discoideum (Social amoeba).